The primary structure comprises 133 residues: Large ribosomal subunit protein bL17 (133 aa).

It belongs to the bacterial ribosomal protein bL17 family. Part of the 50S ribosomal subunit. Contacts protein L32.

The protein is Large ribosomal subunit protein bL17 of Alteromonas mediterranea (strain DSM 17117 / CIP 110805 / LMG 28347 / Deep ecotype).